Reading from the N-terminus, the 285-residue chain is Phasyl DNA replicon protein arp (285 aa).

Essential for autonomous replication of the phasyl DNA replicon. The chain is Phasyl DNA replicon protein arp (arp) from Escherichia coli.